A 308-amino-acid chain; its full sequence is uncharacterized protein (308 aa).

Residues L50, D90, N117, Y182, K186, I222, and T224 each coordinate NADP(+). The Proton acceptor role is filled by Y182. The active-site Lowers pKa of active site Tyr is K186.

This sequence belongs to the short-chain dehydrogenases/reductases (SDR) family.

This is an uncharacterized protein from Saccharomyces cerevisiae (strain ATCC 204508 / S288c) (Baker's yeast).